The chain runs to 439 residues: Ribosomal protein uS12 methylthiotransferase RimO (439 aa).

The region spanning 2–114 (SKLYLMSLGC…IDEMILKKTN (113 aa)) is the MTTase N-terminal domain. 6 residues coordinate [4Fe-4S] cluster: Cys-11, Cys-45, Cys-77, Cys-146, Cys-150, and Cys-153. In terms of domain architecture, Radical SAM core spans 132–363 (TGSNSHAFIK…VDEVIEKSFE (232 aa)).

This sequence belongs to the methylthiotransferase family. RimO subfamily. [4Fe-4S] cluster is required as a cofactor.

The protein localises to the cytoplasm. It carries out the reaction L-aspartate(89)-[ribosomal protein uS12]-hydrogen + (sulfur carrier)-SH + AH2 + 2 S-adenosyl-L-methionine = 3-methylsulfanyl-L-aspartate(89)-[ribosomal protein uS12]-hydrogen + (sulfur carrier)-H + 5'-deoxyadenosine + L-methionine + A + S-adenosyl-L-homocysteine + 2 H(+). In terms of biological role, catalyzes the methylthiolation of an aspartic acid residue of ribosomal protein uS12. The sequence is that of Ribosomal protein uS12 methylthiotransferase RimO from Campylobacter jejuni subsp. jejuni serotype O:6 (strain 81116 / NCTC 11828).